Reading from the N-terminus, the 383-residue chain is Queuine tRNA-ribosyltransferase (383 aa).

Asp-92 (proton acceptor) is an active-site residue. Substrate-binding positions include 92–96, Asp-146, Gln-190, and Gly-217; that span reads DSGGF. Residues 248-254 form an RNA binding region; it reads GVGKPED. Asp-267 functions as the Nucleophile in the catalytic mechanism. Residues 272-276 are RNA binding; important for wobble base 34 recognition; it reads TRNAR. Residues Cys-310, Cys-312, Cys-315, and His-341 each contribute to the Zn(2+) site.

The protein belongs to the queuine tRNA-ribosyltransferase family. Homodimer. Within each dimer, one monomer is responsible for RNA recognition and catalysis, while the other monomer binds to the replacement base PreQ1. Zn(2+) serves as cofactor.

The enzyme catalyses 7-aminomethyl-7-carbaguanine + guanosine(34) in tRNA = 7-aminomethyl-7-carbaguanosine(34) in tRNA + guanine. Its pathway is tRNA modification; tRNA-queuosine biosynthesis. Functionally, catalyzes the base-exchange of a guanine (G) residue with the queuine precursor 7-aminomethyl-7-deazaguanine (PreQ1) at position 34 (anticodon wobble position) in tRNAs with GU(N) anticodons (tRNA-Asp, -Asn, -His and -Tyr). Catalysis occurs through a double-displacement mechanism. The nucleophile active site attacks the C1' of nucleotide 34 to detach the guanine base from the RNA, forming a covalent enzyme-RNA intermediate. The proton acceptor active site deprotonates the incoming PreQ1, allowing a nucleophilic attack on the C1' of the ribose to form the product. After dissociation, two additional enzymatic reactions on the tRNA convert PreQ1 to queuine (Q), resulting in the hypermodified nucleoside queuosine (7-(((4,5-cis-dihydroxy-2-cyclopenten-1-yl)amino)methyl)-7-deazaguanosine). The protein is Queuine tRNA-ribosyltransferase of Psychrobacter cryohalolentis (strain ATCC BAA-1226 / DSM 17306 / VKM B-2378 / K5).